A 98-amino-acid chain; its full sequence is NADH-ubiquinone oxidoreductase chain 4L (98 aa).

Helical transmembrane passes span Met-1–Met-21, Ala-29–Leu-49, and Ile-61–Ile-81.

It belongs to the complex I subunit 4L family. In terms of assembly, core subunit of respiratory chain NADH dehydrogenase (Complex I) which is composed of 45 different subunits.

The protein localises to the mitochondrion inner membrane. The enzyme catalyses a ubiquinone + NADH + 5 H(+)(in) = a ubiquinol + NAD(+) + 4 H(+)(out). Functionally, core subunit of the mitochondrial membrane respiratory chain NADH dehydrogenase (Complex I) which catalyzes electron transfer from NADH through the respiratory chain, using ubiquinone as an electron acceptor. Part of the enzyme membrane arm which is embedded in the lipid bilayer and involved in proton translocation. The sequence is that of NADH-ubiquinone oxidoreductase chain 4L (MT-ND4L) from Berardius bairdii (Baird's beaked whale).